A 162-amino-acid polypeptide reads, in one-letter code: ATP-dependent Clp protease adapter protein CLPS1, chloroplastic (162 aa).

Residues 1–58 (MAASCLRPAPTASAQMMTRSPVAGLPRPCSALQRSGCTLQGAFGTFAPQTTRTFVVTW) constitute a chloroplast transit peptide.

It belongs to the ClpS family.

It localises to the plastid. The protein resides in the chloroplast stroma. In terms of biological role, small adapter protein that modulate the activity of plastid Clp protease system (CLPC). Probably involved in substrate selection for plastid CLPC. The protein is ATP-dependent Clp protease adapter protein CLPS1, chloroplastic of Chlamydomonas reinhardtii (Chlamydomonas smithii).